A 911-amino-acid polypeptide reads, in one-letter code: MQLRVHPTMDCSGRSTSNIERDSDLGDDLSHGDRTDDEMRDCDSVDGEHHQLSAKAAIAARLSHTVSGGGGSFASPEPQTELPLSHHHQLPPNHPLNALGSFMGIGGLHSIPNLQHSDVLEKLKMQVRDMKVGLMEQDYAAAAHAAAFGANMLPTTISSGFPLPHNSVAFGHVTSSPSGGNGSSYNGGTTPTNSSNSNATTNGGGTAGPGGTGGSGGGGGGGGGGGGGVGGHQFSFASPTAAPSGKEARHFAANSASNSSTSSEASNSSQQNNGWSFEEQFKQVRQLYEINDDPKRKEFLDDLFSFMQKRGTPINRLPIMAKSVLDLYELYNLVIARGGLVDVINKKLWQEIIKGLHLPSSITSAAFTLRTQYMKYLYPYECEKKNLSTPAELQAAIDGNRREGRRSSYGQYEAMHNQMPMTPISRPSLPGGMQQMSPLALVTHAAVANNQQAQAAAAAAAAHHRLMGAPAFGQMPNLVKQEIESRMMEYLQLIQAKKEQGMPPVLGGNHPHQQQHSQQQQQQQHHHQQQQQQQSQQQHHLQQQRQRSQSPDLSKHEALSAQVALWHMYHNNNSPPGSAHTSPQQREALNLSDSPPNLTNIKREREREPTPEPVDQDDKFVDQPPPAKRVGSGLLPPGFPANFYLNPHNMAAVAAAAGFHHPSMGHQQDAASEGEPEDDYAHGEHNTTGNSSSMHDDSEPQQMNGHHHHQTHHLDKSDDSAIENSPTTSTTTGGSVGHRHSSPVSTKKKGGAKPQSGGKDVPTEDKDASSSGKLNPLETLSLLSGMQFQVARNGTGDNGEPQLIVNLELNGVKYSGVLVANVPLSQSETRTSSPCHAEAPTVEEEKDEEEEEEPKAAEEESHRSPVKQENEDVDQDMEGSEVLLNGGASAVGGAGAGVGVGVPLLKDAVVS.

Disordered stretches follow at residues 1-44 (MQLR…DCDS), 67-87 (SGGGGSFASPEPQTELPLSHH), and 172-274 (HVTS…QNNG). Residues 19–34 (IERDSDLGDDLSHGDR) show a composition bias toward basic and acidic residues. Serine 30 carries the phosphoserine modification. Phosphothreonine is present on threonine 35. A Phosphoserine modification is found at serine 44. Positions 174-201 (TSSPSGGNGSSYNGGTTPTNSSNSNATT) are enriched in low complexity. Gly residues predominate over residues 202 to 231 (NGGGTAGPGGTGGSGGGGGGGGGGGGGVGG). Residues 252-273 (AANSASNSSTSSEASNSSQQNN) are compositionally biased toward low complexity. An ARID domain is found at 293–385 (DPKRKEFLDD…YLYPYECEKK (93 aa)). Disordered stretches follow at residues 501–633 (GMPP…VGSG), 662–775 (PSMG…GKLN), and 826–877 (QSET…DQDM). Residues 512 to 550 (HQQQHSQQQQQQQHHHQQQQQQQSQQQHHLQQQRQRSQS) are compositionally biased toward low complexity. The segment covering 570–600 (HNNNSPPGSAHTSPQQREALNLSDSPPNLTN) has biased composition (polar residues). 2 positions are modified to phosphoserine: serine 592 and serine 594. The span at 601-621 (IKREREREPTPEPVDQDDKFV) shows a compositional bias: basic and acidic residues. Serine 720 bears the Phosphoserine mark. The region spanning 731–825 (TTGGSVGHRH…GVLVANVPLS (95 aa)) is the REKLES domain. Positions 737–751 (GHRHSSPVSTKKKGG) are enriched in basic residues. The segment covering 841–853 (TVEEEKDEEEEEE) has biased composition (acidic residues). Residues 854-870 (PKAAEEESHRSPVKQEN) show a composition bias toward basic and acidic residues.

In terms of tissue distribution, present in the pharyngeal muscles, hindgut epithelium, amnioserosa, ring gland, midgut-hindgut junction, posterior region of each brain lobe, longitudinal glial cells of the CNS and the salivary gland duct of germ-band retracted embryos.

The protein resides in the nucleus. Transcription factor which is a downstream target of gcm and repo. Directly or indirectly activates the transcription of locos and pros, which are essential for the development of some glial cells. Plays an essential role in defining the cell shape and migration characteristics of longitudinal glia that enable them to establish a normal axon scaffold. This chain is Protein dead ringer (retn), found in Drosophila melanogaster (Fruit fly).